We begin with the raw amino-acid sequence, 156 residues long: MTSWLLLAEAGVPEGGLFDLDATLPLMAIQVVFLTFILNAIFFRPIGRTVEERENYVASSRADAKQKLAQVERLEANLTEQLRGARKQSQTVIAEAEEEVNRLYQEALRMAQAEANNIRESSRREIEIQKAAAIKSLQGDVDRLSNLIVDRLLASR.

Residues 23-43 (TLPLMAIQVVFLTFILNAIFF) traverse the membrane as a helical segment.

The protein belongs to the ATPase B chain family. In terms of assembly, F-type ATPases have 2 components, F(1) - the catalytic core - and F(0) - the membrane proton channel. F(1) has five subunits: alpha(3), beta(3), gamma(1), delta(1), epsilon(1). F(0) has four main subunits: a(1), b(1), b'(1) and c(10-14). The alpha and beta chains form an alternating ring which encloses part of the gamma chain. F(1) is attached to F(0) by a central stalk formed by the gamma and epsilon chains, while a peripheral stalk is formed by the delta, b and b' chains.

It localises to the plastid. The protein resides in the organellar chromatophore thylakoid membrane. F(1)F(0) ATP synthase produces ATP from ADP in the presence of a proton or sodium gradient. F-type ATPases consist of two structural domains, F(1) containing the extramembraneous catalytic core and F(0) containing the membrane proton channel, linked together by a central stalk and a peripheral stalk. During catalysis, ATP synthesis in the catalytic domain of F(1) is coupled via a rotary mechanism of the central stalk subunits to proton translocation. Its function is as follows. Component of the F(0) channel, it forms part of the peripheral stalk, linking F(1) to F(0). The b'-subunit is a diverged and duplicated form of b found in plants and photosynthetic bacteria. The polypeptide is ATP synthase subunit b', organellar chromatophore (Paulinella chromatophora).